The primary structure comprises 195 residues: Imidazoleglycerol-phosphate dehydratase (195 aa).

Belongs to the imidazoleglycerol-phosphate dehydratase family.

The protein resides in the cytoplasm. The enzyme catalyses D-erythro-1-(imidazol-4-yl)glycerol 3-phosphate = 3-(imidazol-4-yl)-2-oxopropyl phosphate + H2O. The protein operates within amino-acid biosynthesis; L-histidine biosynthesis; L-histidine from 5-phospho-alpha-D-ribose 1-diphosphate: step 6/9. The protein is Imidazoleglycerol-phosphate dehydratase of Burkholderia lata (strain ATCC 17760 / DSM 23089 / LMG 22485 / NCIMB 9086 / R18194 / 383).